The chain runs to 546 residues: Oncoprotein-induced transcript 3 protein (546 aa).

Positions 1-19 (MPLSLLLTCLSTTVTLVSP) are cleaved as a signal peptide. N-linked (GlcNAc...) asparagine glycosylation is found at Asn-89 and Asn-116. Positions 182–222 (DENECEHNNGGCSEICVNLKNSHRCACGVGRVLRSDGKTCE) constitute an EGF-like; calcium-binding domain. 3 disulfide bridges follow: Cys-186/Cys-197, Cys-193/Cys-206, and Cys-208/Cys-221. The 256-residue stretch at 261-516 (TCQVPVLCKS…SRCAQGCHRR (256 aa)) folds into the ZP domain. Asn-299 carries N-linked (GlcNAc...) asparagine glycosylation.

Liver-specific. Expressed only in the hepatocytes.

Its subcellular location is the nucleus envelope. Functionally, may be involved in hepatocellular function and development. In Mus musculus (Mouse), this protein is Oncoprotein-induced transcript 3 protein (Oit3).